A 203-amino-acid chain; its full sequence is MLDREGFRPNVGIILLNQRSEVFWGKRIRTHSWQFPQGGIKHGESPEQAMFRELHEEVGLFPDHVRIIARTRDWLRYEVPDHFIRRDARGHYKGQKQIWFLLQLTGRDSDMNLRATDHPEFDAWRWHDYWVPLEVVIEFKRNVYQMALTELARYVPRPNHHNRYLRSGMRAHRRDEGSEHNDHLDPTGPHDAGASVSEPKQAE.

Residues 6–149 (GFRPNVGIIL…KRNVYQMALT (144 aa)) form the Nudix hydrolase domain. The Nudix box motif lies at 38–59 (GGIKHGESPEQAMFRELHEEVG). The segment at 170 to 203 (RAHRRDEGSEHNDHLDPTGPHDAGASVSEPKQAE) is disordered. Residues 173-185 (RRDEGSEHNDHLD) are compositionally biased toward basic and acidic residues.

Belongs to the Nudix hydrolase family. RppH subfamily. A divalent metal cation is required as a cofactor.

Accelerates the degradation of transcripts by removing pyrophosphate from the 5'-end of triphosphorylated RNA, leading to a more labile monophosphorylated state that can stimulate subsequent ribonuclease cleavage. The chain is RNA pyrophosphohydrolase from Leptothrix cholodnii (strain ATCC 51168 / LMG 8142 / SP-6) (Leptothrix discophora (strain SP-6)).